A 175-amino-acid chain; its full sequence is MEKLTDLNYTSSVITLMNSTLHTILEDPGMAYFPYIASVLTVLFTLHKASIPTMKIALKTSKCSYKVVKYCIVTIFNTLLKLAGYKEQITTKDEIEKQMDRVVKEMRRQLEMIDKLTTREIEQVELLKRIHDKLMIRAVDEIDMTKEINQKNVRTLEEWENGKNPYEPKEVTAAM.

Residues 1 to 28 are Lumenal-facing; sequence MEKLTDLNYTSSVITLMNSTLHTILEDP. A hydrophobic region spans residues 7–21; sequence LNYTSSVITLMNSTL. Residues N8 and N18 are each glycosylated (N-linked (GlcNAc...) asparagine; by host). The chain crosses the membrane as a helical; Signal-anchor for type III membrane protein span at residues 29–51; sequence GMAYFPYIASVLTVLFTLHKASI. Over 52 to 175 the chain is Cytoplasmic; the sequence is PTMKIALKTS…YEPKEVTAAM (124 aa). The tract at residues 67 to 85 is hydrophobic; sequence VVKYCIVTIFNTLLKLAGY. Ca(2+) contacts are provided by E120 and Q123.

The protein belongs to the rotavirus NSP4 family. As to quaternary structure, homotetramer. Interacts with the immature particle in the viroplasm. Interacts with host CAV1, early and late in infection. Interacts with host integrin ITGA1/ITGB1 heterodimer. Interacts with host integrin ITGA2/ITGB1 heterodimer. Interaction with microtubules blocks trafficking to the Golgi apparatus. In terms of processing, mannosylated. Post-translationally, the N-glycosyl content is primarily Man(9)GlcNAc, with a small amount of Man(8)GlcNAc.

It localises to the host rough endoplasmic reticulum membrane. The protein localises to the host membrane. Its subcellular location is the host caveola. It is found in the secreted. In terms of biological role, plays an essential role in the virus replication cycle by acting as a viroporin. Creates a pore in the host endoplasmic reticulum and as a consequence releases Ca(2+) in the cytoplasm of infected cell. In turn, high levels of cytoplasmic calcium trigger membrane trafficking and transport of viral ER-associated proteins to viroplasms, sites of viral genome replication and immature particle assembly. Functionally, the secreted form acts as an enterotoxin that causes phospholipase C-dependent elevation of the intracellular calcium concentration in host intestinal mucosa cells. Increased concentration of intracellular calcium disrupts the cytoskeleton and the tight junctions, raising the paracellular permeability. Potentiates chloride ion secretion through a calcium ion-dependent signaling pathway, inducing age-dependent diarrhea. To perform this enterotoxigenic role in vivo, NSP4 is released from infected enterocytes in a soluble form capable of diffusing within the intestinal lumen and interacting with host plasma membrane receptors on neighboring epithelial cells such as integrins ITGA1/ITGB1 and ITGA2/ITGB1. The sequence is that of Non-structural glycoprotein 4 from Rotavirus A (strain RVA/Cow/United States/NCDV-Lincoln/1969/G6P6[1]) (RV-A).